The sequence spans 732 residues: Probable boron transporter 3 (732 aa).

Residue Met-1 is modified to N-acetylmethionine. The Cytoplasmic segment spans residues 1–37 (MDEAESFVPFQGIKKDVKGRLNCYKQDWISGLRAGFR). Residues 38 to 58 (ILAPTTYIFFASAIPVITFGE) form a helical membrane-spanning segment. Topologically, residues 59-77 (QLERDTDGKITAVQTLVST) are extracellular. A helical transmembrane segment spans residues 78–98 (ALCGVIHSIIGGQPLLILGVA). Over 99–123 (EPTVIMYTFMFNFAKSRTDLGSNLF) the chain is Cytoplasmic. The helical transmembrane segment at 124–144 (LAWTGWVCLWTGLLLFLLAVL) threads the bilayer. Topologically, residues 145–157 (GACTFINRFTRLA) are extracellular. A helical transmembrane segment spans residues 158 to 178 (GELFGILIAMLFMQEAIRGIV). At 179–197 (DEFGVPGRTNPRSAEFQPA) the chain is on the cytoplasmic side. The helical transmembrane segment at 198 to 218 (WVFANGMFGLVLSSGLLYTGL) threads the bilayer. Residues 219-234 (KSRKARSWRFGAEWLR) lie on the Extracellular side of the membrane. A helical transmembrane segment spans residues 235-255 (GFIADYGVPVMVVVWTCISYI). At 256–291 (PWKSVPQGIPRRLVSPNPWSPGAYQNWTVIKEMVDV) the chain is on the cytoplasmic side. The chain crosses the membrane as a helical span at residues 292–312 (PVLYILLAVVPASMIAVLYYF). Topologically, residues 313–339 (DHSVASQLAQQEDFNLRKPPAYHYDLF) are extracellular. The helical transmembrane segment at 340–360 (LLGFLTILCGLIGIPPSNGVI) threads the bilayer. At 361 to 463 (PQSPMHTKSL…ILPVEVKEQR (103 aa)) the chain is on the cytoplasmic side. Residues 464–484 (VSNFLQAMMVAGCVAAMPLIK) traverse the membrane as a helical segment. Residues 485-556 (RIPSSVLWGY…LFQTAYLLVC (72 aa)) are Extracellular-facing. A helical membrane pass occupies residues 557-577 (FGITWVPVAGVLFPLMIMFLV). Residues 578–732 (PVRQYVLPNF…QRLSNLGKSV (155 aa)) are Cytoplasmic-facing. Residues 695-732 (GGGEISPRSSAGRAPFSPRSATGGGGGEQRLSNLGKSV) are disordered.

The protein belongs to the anion exchanger (TC 2.A.31.3) family.

It is found in the membrane. In terms of biological role, probable boron transporter. Boron is essential for maintaining the integrity of plants cell walls. In Arabidopsis thaliana (Mouse-ear cress), this protein is Probable boron transporter 3 (BOR3).